The chain runs to 531 residues: Acetate CoA-transferase YdiF (531 aa).

Catalysis depends on Glu-333, which acts as the 5-glutamyl coenzyme A thioester intermediate.

It belongs to the 3-oxoacid CoA-transferase family. In terms of assembly, homotetramer; dimer of dimers.

It catalyses the reaction an acyl-CoA + acetate = a carboxylate + acetyl-CoA. CoA transferase having broad substrate specificity for short-chain acyl-CoA thioesters with the activity decreasing when the length of the carboxylic acid chain exceeds four carbons. Exhibits high activity with acetoacetyl-CoA, propionyl-CoA, crotonoyl-CoA or butyryl-CoA as donors, with acetate as an acceptor. When acetyl-CoA is used as the donor, propionate, acetoacetate, butyrate, isobutyrate, and 4-hydroxybutyrate can be utilized as acceptors but not isovalerate. May play a role in short-chain fatty acid metabolism in E.coli. The protein is Acetate CoA-transferase YdiF of Escherichia coli O157:H7.